Consider the following 182-residue polypeptide: Putative manganese efflux pump MntP (182 aa).

The next 6 helical transmembrane spans lie at 6–26 (LIPL…VSLG), 37–57 (ILYI…IGMV), 72–92 (FAGA…SILE), 101–121 (IGIS…SVGL), 131–151 (IITI…GLLL), and 162–182 (YGEI…LFPI).

This sequence belongs to the MntP (TC 9.B.29) family.

Its subcellular location is the cell membrane. Probably functions as a manganese efflux pump. This chain is Putative manganese efflux pump MntP, found in Bacillus mycoides (strain KBAB4) (Bacillus weihenstephanensis).